The chain runs to 486 residues: uncharacterized protein (486 aa).

The N-terminal stretch at 1-25 (MGTMRSVYLIIIIILFFAFISLSFG) is a signal peptide. 2 stretches are compositionally biased toward basic and acidic residues: residues 306–316 (KKEEKENEESS) and 326–349 (KKEE…KQEK). The interval 306-349 (KKEEKENEESSKTINQMQRHKKEEKSQTQETKKPSKNEMNKQEK) is disordered.

This is an uncharacterized protein from Methanocaldococcus jannaschii (strain ATCC 43067 / DSM 2661 / JAL-1 / JCM 10045 / NBRC 100440) (Methanococcus jannaschii).